Reading from the N-terminus, the 244-residue chain is 7-cyano-7-deazaguanine synthase (244 aa).

14 to 24 provides a ligand contact to ATP; that stretch reads FSGGQDSATCV. Zn(2+) is bound by residues cysteine 202, cysteine 217, cysteine 220, and cysteine 223.

It belongs to the QueC family. The cofactor is Zn(2+).

It catalyses the reaction 7-carboxy-7-deazaguanine + NH4(+) + ATP = 7-cyano-7-deazaguanine + ADP + phosphate + H2O + H(+). The protein operates within purine metabolism; 7-cyano-7-deazaguanine biosynthesis. In terms of biological role, catalyzes the ATP-dependent conversion of 7-carboxy-7-deazaguanine (CDG) to 7-cyano-7-deazaguanine (preQ(0)). This Burkholderia thailandensis (strain ATCC 700388 / DSM 13276 / CCUG 48851 / CIP 106301 / E264) protein is 7-cyano-7-deazaguanine synthase.